Here is a 91-residue protein sequence, read N- to C-terminus: Large ribosomal subunit protein eL34 (91 aa).

Residues 48-69 are disordered; that stretch reads RGRPVEMRKLPKTKKRPERPMP.

It belongs to the eukaryotic ribosomal protein eL34 family.

The protein is Large ribosomal subunit protein eL34 (rpl34e) of Pyrococcus horikoshii (strain ATCC 700860 / DSM 12428 / JCM 9974 / NBRC 100139 / OT-3).